Consider the following 243-residue polypeptide: RNA-binding protein with serine-rich domain 1 homolog (243 aa).

Positions 48-92 (SSTRQFNNTRSPSGRSASRSSNFSHRSSSRDSFSSNRSYSSSLSR) are disordered. A compositionally biased stretch (low complexity) spans 57 to 92 (RSPSGRSASRSSNFSHRSSSRDSFSSNRSYSSSLSR). Residues 99 to 177 (RTILVENLTR…EELFVSIKRF (79 aa)) enclose the RRM domain. Residues 189-243 (YENSYRPSRSQNNSHYNDKSFHRSRYSRARSRSPGSNISEYSDQSPPYHSYRHRP) form a disordered region. Over residues 193–203 (YRPSRSQNNSH) the composition is skewed to polar residues. A compositionally biased stretch (basic residues) spans 210 to 219 (HRSRYSRARS). The span at 222–235 (PGSNISEYSDQSPP) shows a compositional bias: polar residues.

Belongs to the splicing factor SR family. Component of the active spliceosome.

The protein localises to the cytoplasm. It is found in the nucleus. Putative component of the spliceosome which enhances the formation of the ATP-dependent A complex of the spliceosome. may participate in mRNA 3'-end cleavage. Also mediates increase of mRNA abundance and translational efficiency. The sequence is that of RNA-binding protein with serine-rich domain 1 homolog from Schizosaccharomyces pombe (strain 972 / ATCC 24843) (Fission yeast).